The following is a 498-amino-acid chain: ATP synthase subunit beta, chloroplastic (498 aa).

172–179 (GGAGVGKT) provides a ligand contact to ATP.

This sequence belongs to the ATPase alpha/beta chains family. As to quaternary structure, F-type ATPases have 2 components, CF(1) - the catalytic core - and CF(0) - the membrane proton channel. CF(1) has five subunits: alpha(3), beta(3), gamma(1), delta(1), epsilon(1). CF(0) has four main subunits: a(1), b(1), b'(1) and c(9-12).

The protein resides in the plastid. Its subcellular location is the chloroplast thylakoid membrane. The catalysed reaction is ATP + H2O + 4 H(+)(in) = ADP + phosphate + 5 H(+)(out). Produces ATP from ADP in the presence of a proton gradient across the membrane. The catalytic sites are hosted primarily by the beta subunits. This chain is ATP synthase subunit beta, chloroplastic, found in Phaseolus vulgaris (Kidney bean).